Reading from the N-terminus, the 342-residue chain is Pre-mRNA-splicing factor 18 (342 aa).

This sequence belongs to the PRP18 family. As to quaternary structure, interacts with the spliceosome. Part of a complex containing U4/U6 snRNPs.

It is found in the nucleus speckle. Functionally, participates in the second step of pre-mRNA splicing. This Xenopus laevis (African clawed frog) protein is Pre-mRNA-splicing factor 18 (prpf18).